Here is a 171-residue protein sequence, read N- to C-terminus: Shikimate kinase (171 aa).

ATP is bound at residue 14-19 (GAGKST). Ser-18 serves as a coordination point for Mg(2+). Residues Asp-36, Arg-60, and Gly-82 each coordinate substrate. Arg-120 provides a ligand contact to ATP. Position 139 (Arg-139) interacts with substrate. Gln-156 lines the ATP pocket.

The protein belongs to the shikimate kinase family. In terms of assembly, monomer. It depends on Mg(2+) as a cofactor.

The protein localises to the cytoplasm. The enzyme catalyses shikimate + ATP = 3-phosphoshikimate + ADP + H(+). It participates in metabolic intermediate biosynthesis; chorismate biosynthesis; chorismate from D-erythrose 4-phosphate and phosphoenolpyruvate: step 5/7. In terms of biological role, catalyzes the specific phosphorylation of the 3-hydroxyl group of shikimic acid using ATP as a cosubstrate. This Shewanella baltica (strain OS195) protein is Shikimate kinase.